A 333-amino-acid polypeptide reads, in one-letter code: Ornithine carbamoyltransferase (333 aa).

Carbamoyl phosphate contacts are provided by residues 56–59 (STRT), Arg107, and 134–137 (HPTQ). L-ornithine is bound by residues Asn167, Asp231, and 235 to 236 (SM). Residues 273–274 (CL) and Arg318 contribute to the carbamoyl phosphate site.

Belongs to the aspartate/ornithine carbamoyltransferase superfamily. OTCase family.

It is found in the cytoplasm. It carries out the reaction carbamoyl phosphate + L-ornithine = L-citrulline + phosphate + H(+). It participates in amino-acid degradation; L-arginine degradation via ADI pathway; carbamoyl phosphate from L-arginine: step 2/2. Its function is as follows. Reversibly catalyzes the transfer of the carbamoyl group from carbamoyl phosphate (CP) to the N(epsilon) atom of ornithine (ORN) to produce L-citrulline. This chain is Ornithine carbamoyltransferase, found in Clostridium botulinum (strain 657 / Type Ba4).